A 209-amino-acid polypeptide reads, in one-letter code: uncharacterized protein (209 aa).

A coiled-coil region spans residues 39-75 (VSFENFMERYDTMEKNIQDLQNKYEEMANNLVAVMAD). Residues 103-131 (TMKDATSLPPPNPNNEQSVFTNGSPTSGK) form a disordered region. The span at 116–129 (NNEQSVFTNGSPTS) shows a compositional bias: polar residues.

Belongs to the asfivirus K205R family.

The protein resides in the host cytoplasm. Its function is as follows. Induces host endoplasmic reticulum stress and consequently activates autophagy and NF-kappa-B signaling pathway. In turn, may induce autophagy-mediated STING1 degradation and innate immune evasion. This is an uncharacterized protein from Ornithodoros (relapsing fever ticks).